Reading from the N-terminus, the 82-residue chain is Small ribosomal subunit protein uS17 (82 aa).

This sequence belongs to the universal ribosomal protein uS17 family. As to quaternary structure, part of the 30S ribosomal subunit.

One of the primary rRNA binding proteins, it binds specifically to the 5'-end of 16S ribosomal RNA. The chain is Small ribosomal subunit protein uS17 from Rhodopseudomonas palustris (strain HaA2).